The chain runs to 111 residues: DNA-directed RNA polymerase subunit Rpo11 (111 aa).

It belongs to the archaeal Rpo11/eukaryotic RPB11/RPC19 RNA polymerase subunit family. In terms of assembly, part of the RNA polymerase complex.

It is found in the cytoplasm. The catalysed reaction is RNA(n) + a ribonucleoside 5'-triphosphate = RNA(n+1) + diphosphate. In terms of biological role, DNA-dependent RNA polymerase (RNAP) catalyzes the transcription of DNA into RNA using the four ribonucleoside triphosphates as substrates. The sequence is that of DNA-directed RNA polymerase subunit Rpo11 from Thermoplasma volcanium (strain ATCC 51530 / DSM 4299 / JCM 9571 / NBRC 15438 / GSS1).